Consider the following 87-residue polypeptide: UPF0250 protein SG0794 (87 aa).

Belongs to the UPF0250 family.

In Sodalis glossinidius (strain morsitans), this protein is UPF0250 protein SG0794.